The following is a 579-amino-acid chain: Nuclear hormone receptor family member nhr-47 (579 aa).

Positions 8 to 83 (GTLCAVCDDI…VGMDKNSIQN (76 aa)) form a DNA-binding region, nuclear receptor. 2 NR C4-type zinc fingers span residues 11-31 (CAVC…CNGC) and 47-71 (CQGN…LQKC). The disordered stretch occupies residues 87–128 (RIGYTKRKRRHDDNDMEGGVHHSEHIRDGSSGSPQMNDESPE). Over residues 104-114 (GGVHHSEHIRD) the composition is skewed to basic and acidic residues. An NR LBD domain is found at 164-553 (ADLHSYATLE…SLVKETSLGP (390 aa)).

Belongs to the nuclear hormone receptor family.

It is found in the nucleus. Orphan nuclear receptor. The protein is Nuclear hormone receptor family member nhr-47 (nhr-47) of Caenorhabditis elegans.